A 167-amino-acid polypeptide reads, in one-letter code: Ribosome maturation factor RimM (167 aa).

Positions 92–166 constitute a PRC barrel domain; that stretch reads DGVYYYRELL…EVRVELMEGL (75 aa).

It belongs to the RimM family. As to quaternary structure, binds ribosomal protein uS19.

It localises to the cytoplasm. In terms of biological role, an accessory protein needed during the final step in the assembly of 30S ribosomal subunit, possibly for assembly of the head region. Essential for efficient processing of 16S rRNA. May be needed both before and after RbfA during the maturation of 16S rRNA. It has affinity for free ribosomal 30S subunits but not for 70S ribosomes. The polypeptide is Ribosome maturation factor RimM (Lactobacillus delbrueckii subsp. bulgaricus (strain ATCC 11842 / DSM 20081 / BCRC 10696 / JCM 1002 / NBRC 13953 / NCIMB 11778 / NCTC 12712 / WDCM 00102 / Lb 14)).